The chain runs to 164 residues: UPF0114 protein YqhA (164 aa).

3 helical membrane-spanning segments follow: residues 10-32, 53-75, and 136-155; these read YASR…ALAL, LILV…MVMF, and LMWY…VMGY.

The protein belongs to the UPF0114 family.

The protein resides in the cell membrane. The protein is UPF0114 protein YqhA of Salmonella typhi.